Here is a 33-residue protein sequence, read N- to C-terminus: Large ribosomal subunit protein eL21 (33 aa).

It belongs to the eukaryotic ribosomal protein eL21 family. In terms of assembly, component of the large ribosomal subunit.

It localises to the cytoplasm. The protein resides in the cytosol. It is found in the endoplasmic reticulum. Functionally, component of the large ribosomal subunit. The ribosome is a large ribonucleoprotein complex responsible for the synthesis of proteins in the cell. The sequence is that of Large ribosomal subunit protein eL21 (rpl21) from Xenopus laevis (African clawed frog).